We begin with the raw amino-acid sequence, 354 residues long: GDSL esterase/lipase At5g03820 (354 aa).

Residues 1-24 (MKMFIIMLMTFSVIACFYAGVGTG) form the signal peptide. Ser-37 acts as the Nucleophile in catalysis. Residues Asn-66, Asn-100, Asn-237, Asn-256, Asn-257, Asn-261, and Asn-321 are each glycosylated (N-linked (GlcNAc...) asparagine). Catalysis depends on residues Asp-329 and His-332.

It belongs to the 'GDSL' lipolytic enzyme family.

The protein resides in the secreted. This chain is GDSL esterase/lipase At5g03820, found in Arabidopsis thaliana (Mouse-ear cress).